A 495-amino-acid chain; its full sequence is Mothers against decapentaplegic homolog 6 (495 aa).

The span at 1 to 15 (MFRSKRSGLVRRLWR) shows a compositional bias: basic residues. 2 disordered regions span residues 1-115 (MFRS…PGWL) and 133-161 (AAGAPRDSGDPQARQSPEPEEGGGPRSRE). A dimethylated arginine; alternate mark is found at arginine 74 and arginine 81. Residues arginine 74 and arginine 81 each carry the omega-N-methylarginine; alternate modification. The MH1 domain maps to 149–276 (PEPEEGGGPR…FSRLCGPESP (128 aa)). A Glycyl lysine isopeptide (Lys-Gly) (interchain with G-Cter in ubiquitin) cross-link involves residue lysine 174. Zn(2+)-binding residues include cysteine 206, cysteine 248, cysteine 261, and histidine 266. Positions 332–495 (WCSVAYWEHR…WLEILLNNHR (164 aa)) constitute an MH2 domain. Phosphoserine; by PRKX; in vitro is present on serine 436.

It belongs to the dwarfin/SMAD family. In terms of assembly, interacts with NEDD4L. Interacts with WWP1. Interacts with STAMBP and PRKX. Interacts with RNF111 and AXIN1. Interacts with TGF-beta type I receptor superfamily members, including ACVR1B, BMPR1B and TGFBR1. In response to BMP2 treatment, interacts with SMAD1; this interaction may inhibit SMAD1-binding to SMAD4. Interacts with HOXC8 and HOXC9. Interacts with PELI1; this interaction interferes with PELI1 complex formation with TRAF6, IRAK1, IRAK4 and MYD88 in response to IL1B and hence negatively regulates IL1R-TLR signaling. Interacts with TSC22D1/TSC-22. Post-translationally, monoubiquitinated at Lys-174 by the E2/E3 hybrid ubiquitin-protein ligase UBE2O, leading to reduced binding affinity for the activated BMP type I receptor ACVR1/ALK2, thereby enhancing BMP7 and regulating adipocyte differentiation. Ubiquitinated by WWP1. Ubiquitinated by ARK2C, promoting proteasomal degradation, leading to enhance the BMP-Smad signaling. In terms of processing, arginine methylation by PRMT1, which is recruited by BMPR2, initiates BMP-Induced signaling and induces dissociation from the BMPR1B receptor at the cell surface leading to derepress downstream Smad1/Smad5 signaling. Phosphorylated by BMP type 1 receptor kinase and by PRKX. In terms of tissue distribution, ubiquitous in various organs, with higher levels in lung.

It localises to the nucleus. In terms of biological role, transforming growth factor-beta superfamily receptors signaling occurs through the Smad family of intracellular mediators. SMAD6 is an inhibitory Smad (i-Smad) that negatively regulates signaling downstream of type I transforming growth factor-beta. Acts as a mediator of TGF-beta and BMP anti-inflammatory activities. Suppresses IL1R-TLR signaling through its direct interaction with PEL1, preventing NF-kappa-B activation, nuclear transport and NF-kappa-B-mediated expression of pro-inflammatory genes. Blocks the BMP-SMAD1 signaling pathway by competing with SMAD4 for receptor-activated SMAD1-binding. Binds to regulatory elements in target promoter regions. The protein is Mothers against decapentaplegic homolog 6 (Smad6) of Mus musculus (Mouse).